The sequence spans 193 residues: Protein GrpE (193 aa).

The span at 1–22 (MDPKEKEKMAEELNVEETKDTA) shows a compositional bias: basic and acidic residues. The interval 1 to 45 (MDPKEKEKMAEELNVEETKDTAEEQPQDDQAEEAAPLTHEEQLEK) is disordered. Residues 23-32 (EEQPQDDQAE) are compositionally biased toward acidic residues.

Belongs to the GrpE family. Homodimer.

The protein resides in the cytoplasm. Participates actively in the response to hyperosmotic and heat shock by preventing the aggregation of stress-denatured proteins, in association with DnaK and GrpE. It is the nucleotide exchange factor for DnaK and may function as a thermosensor. Unfolded proteins bind initially to DnaJ; upon interaction with the DnaJ-bound protein, DnaK hydrolyzes its bound ATP, resulting in the formation of a stable complex. GrpE releases ADP from DnaK; ATP binding to DnaK triggers the release of the substrate protein, thus completing the reaction cycle. Several rounds of ATP-dependent interactions between DnaJ, DnaK and GrpE are required for fully efficient folding. The chain is Protein GrpE from Bacteroides thetaiotaomicron (strain ATCC 29148 / DSM 2079 / JCM 5827 / CCUG 10774 / NCTC 10582 / VPI-5482 / E50).